The chain runs to 197 residues: FMN-dependent NADH:quinone oxidoreductase (197 aa).

Residues Ser-10, 16-18, and 96-99 contribute to the FMN site; these read SKS and MYNF.

Belongs to the azoreductase type 1 family. Homodimer. Requires FMN as cofactor.

The enzyme catalyses 2 a quinone + NADH + H(+) = 2 a 1,4-benzosemiquinone + NAD(+). It carries out the reaction N,N-dimethyl-1,4-phenylenediamine + anthranilate + 2 NAD(+) = 2-(4-dimethylaminophenyl)diazenylbenzoate + 2 NADH + 2 H(+). Its function is as follows. Quinone reductase that provides resistance to thiol-specific stress caused by electrophilic quinones. In terms of biological role, also exhibits azoreductase activity. Catalyzes the reductive cleavage of the azo bond in aromatic azo compounds to the corresponding amines. This chain is FMN-dependent NADH:quinone oxidoreductase, found in Marinomonas sp. (strain MWYL1).